A 393-amino-acid chain; its full sequence is Acetylornithine aminotransferase (393 aa).

Residues 95 to 96 and Phe-127 contribute to the pyridoxal 5'-phosphate site; that span reads GA. Residue Arg-130 coordinates N(2)-acetyl-L-ornithine. 214–217 serves as a coordination point for pyridoxal 5'-phosphate; the sequence is DEVQ. Lys-243 is modified (N6-(pyridoxal phosphate)lysine). Ser-271 is a N(2)-acetyl-L-ornithine binding site. Thr-272 is a pyridoxal 5'-phosphate binding site.

It belongs to the class-III pyridoxal-phosphate-dependent aminotransferase family. ArgD subfamily. As to quaternary structure, homodimer. The cofactor is pyridoxal 5'-phosphate.

It localises to the cytoplasm. It catalyses the reaction N(2)-acetyl-L-ornithine + 2-oxoglutarate = N-acetyl-L-glutamate 5-semialdehyde + L-glutamate. The protein operates within amino-acid biosynthesis; L-arginine biosynthesis; N(2)-acetyl-L-ornithine from L-glutamate: step 4/4. In Nitrosomonas europaea (strain ATCC 19718 / CIP 103999 / KCTC 2705 / NBRC 14298), this protein is Acetylornithine aminotransferase.